Here is a 136-residue protein sequence, read N- to C-terminus: Ribonuclease VapC47 (136 aa).

One can recognise a PINc domain in the interval isoleucine 2–isoleucine 104. The Mg(2+) site is built by aspartate 5 and aspartate 94.

The protein belongs to the PINc/VapC protein family. Requires Mg(2+) as cofactor.

Toxic component of a type II toxin-antitoxin (TA) system. An RNase. Its toxic effect on colony formation is neutralized by coexpression with cognate antitoxin VapB47. This chain is Ribonuclease VapC47, found in Mycobacterium tuberculosis (strain CDC 1551 / Oshkosh).